Consider the following 1035-residue polypeptide: Putative protein FAM47C (1035 aa).

Disordered stretches follow at residues 1-21 (MGDQ…TPWY) and 159-797 (LEDA…RRVS). Residues 159–173 (LEDAGSCEGQEKTTD) show a composition bias toward basic and acidic residues. The span at 380–392 (PEPPKTRVPPLRP) shows a compositional bias: pro residues. The segment covering 478–490 (PPEKDVSHLRPEP) has biased composition (basic and acidic residues). Residues 533–544 (SLHQAPPESSVS) are compositionally biased toward polar residues. Basic and acidic residues-rich tracts occupy residues 611–622 (PETRVSHLRPEP), 683–694 (PETRVSHLRPEP), and 753–766 (EPLE…RPEP).

The protein belongs to the FAM47 family.

This is Putative protein FAM47C (FAM47C) from Homo sapiens (Human).